A 495-amino-acid polypeptide reads, in one-letter code: UDP-N-acetylmuramoyl-L-alanyl-D-glutamate--2,6-diaminopimelate ligase (495 aa).

Residues Leu27, Ser29, and 44–46 (HQA) each bind UDP-N-acetyl-alpha-D-muramoyl-L-alanyl-D-glutamate. 116-122 (GTNGKTT) contributes to the ATP binding site. UDP-N-acetyl-alpha-D-muramoyl-L-alanyl-D-glutamate contacts are provided by residues Asn157, 158–159 (TT), Ser185, Gln191, and Arg193. Lys225 carries the post-translational modification N6-carboxylysine. Meso-2,6-diaminopimelate contacts are provided by residues Arg390, 414–417 (DNPR), Gly465, and Glu469. The Meso-diaminopimelate recognition motif signature appears at 414 to 417 (DNPR).

The protein belongs to the MurCDEF family. MurE subfamily. Mg(2+) serves as cofactor. Post-translationally, carboxylation is probably crucial for Mg(2+) binding and, consequently, for the gamma-phosphate positioning of ATP.

The protein resides in the cytoplasm. It catalyses the reaction UDP-N-acetyl-alpha-D-muramoyl-L-alanyl-D-glutamate + meso-2,6-diaminopimelate + ATP = UDP-N-acetyl-alpha-D-muramoyl-L-alanyl-gamma-D-glutamyl-meso-2,6-diaminopimelate + ADP + phosphate + H(+). It functions in the pathway cell wall biogenesis; peptidoglycan biosynthesis. Its function is as follows. Catalyzes the addition of meso-diaminopimelic acid to the nucleotide precursor UDP-N-acetylmuramoyl-L-alanyl-D-glutamate (UMAG) in the biosynthesis of bacterial cell-wall peptidoglycan. This is UDP-N-acetylmuramoyl-L-alanyl-D-glutamate--2,6-diaminopimelate ligase from Salmonella typhimurium (strain LT2 / SGSC1412 / ATCC 700720).